Reading from the N-terminus, the 648-residue chain is ATP-dependent DNA helicase Q1 (648 aa).

The region spanning 100–275 (INVTMARKDI…QKILCVGKCL (176 aa)) is the Helicase ATP-binding domain. Residue 113 to 120 (MPTGGGKS) coordinates ATP. Positions 219–222 (DEVH) match the DEVH box motif. The 153-residue stretch at 299–451 (DFTEDIVKLI…EMVSYCQNVS (153 aa)) folds into the Helicase C-terminal domain. Positions 453, 471, 475, and 478 each coordinate Zn(2+). 2 positions are modified to N6-acetyllysine: K514 and K522. At S597 the chain carries Phosphoserine. Positions 601 to 648 (ALSEARQVEQVDSKGEEQSSGNSQKSKSRLQPSGSKNAGAKKRKLDDA) are disordered. The segment covering 606 to 617 (RQVEQVDSKGEE) has biased composition (basic and acidic residues). Residues 618–636 (QSSGNSQKSKSRLQPSGSK) are compositionally biased toward polar residues. At S633 the chain carries Phosphoserine. Residues 639–648 (GAKKRKLDDA) are compositionally biased toward basic residues.

It belongs to the helicase family. RecQ subfamily. As to quaternary structure, may form homodimers or higher order oligomers. Interacts with EXO1. Interacts with MLH1. Interacts with PARP1. Mg(2+) serves as cofactor. Requires Mn(2+) as cofactor. It depends on Zn(2+) as a cofactor. As to expression, expressed in all tissues examined. Only expressed in spermatocytes. Expression increases at pachytene (17 days old) and decreases after completion of meiosis II (7 weeks old).

The protein resides in the nucleus. The enzyme catalyses Couples ATP hydrolysis with the unwinding of duplex DNA by translocating in the 3'-5' direction.. It carries out the reaction ATP + H2O = ADP + phosphate + H(+). It catalyses the reaction dATP + H2O = dADP + phosphate + H(+). DNA helicase that plays a role in DNA damage repair and genome stability. Exhibits a magnesium- and ATP-dependent DNA-helicase activity that unwinds single- and double-stranded DNA in a 3'-5' direction. Plays a role in restoring regressed replication forks. Required to restart stalled replication forks induced by abortive topoisomerase 1 and 2 lesions. May play a role in the repair of DNA that is damaged by ultraviolet light or other mutagens. The polypeptide is ATP-dependent DNA helicase Q1 (Recql) (Mus musculus (Mouse)).